A 364-amino-acid polypeptide reads, in one-letter code: Capsular polysaccharide phosphotransferase cps1A (364 aa).

The protein belongs to the stealth family.

In terms of biological role, part of a capsular polysaccharide synthesis locus. The polypeptide is Capsular polysaccharide phosphotransferase cps1A (cps1A) (Actinobacillus pleuropneumoniae (Haemophilus pleuropneumoniae)).